Consider the following 186-residue polypeptide: Peptide deformylase (186 aa).

Fe cation is bound by residues Cys-113 and His-156. Glu-157 is a catalytic residue. His-160 lines the Fe cation pocket.

This sequence belongs to the polypeptide deformylase family. Fe(2+) is required as a cofactor.

The enzyme catalyses N-terminal N-formyl-L-methionyl-[peptide] + H2O = N-terminal L-methionyl-[peptide] + formate. Removes the formyl group from the N-terminal Met of newly synthesized proteins. Requires at least a dipeptide for an efficient rate of reaction. N-terminal L-methionine is a prerequisite for activity but the enzyme has broad specificity at other positions. The sequence is that of Peptide deformylase from Levilactobacillus brevis (strain ATCC 367 / BCRC 12310 / CIP 105137 / JCM 1170 / LMG 11437 / NCIMB 947 / NCTC 947) (Lactobacillus brevis).